A 376-amino-acid polypeptide reads, in one-letter code: UDP-N-acetylglucosamine--N-acetylmuramyl-(pentapeptide) pyrophosphoryl-undecaprenol N-acetylglucosamine transferase (376 aa).

Residues 11-13, N117, R160, S208, and Q310 contribute to the UDP-N-acetyl-alpha-D-glucosamine site; that span reads TGG.

The protein belongs to the glycosyltransferase 28 family. MurG subfamily.

It localises to the cell inner membrane. The catalysed reaction is di-trans,octa-cis-undecaprenyl diphospho-N-acetyl-alpha-D-muramoyl-L-alanyl-D-glutamyl-meso-2,6-diaminopimeloyl-D-alanyl-D-alanine + UDP-N-acetyl-alpha-D-glucosamine = di-trans,octa-cis-undecaprenyl diphospho-[N-acetyl-alpha-D-glucosaminyl-(1-&gt;4)]-N-acetyl-alpha-D-muramoyl-L-alanyl-D-glutamyl-meso-2,6-diaminopimeloyl-D-alanyl-D-alanine + UDP + H(+). It functions in the pathway cell wall biogenesis; peptidoglycan biosynthesis. Functionally, cell wall formation. Catalyzes the transfer of a GlcNAc subunit on undecaprenyl-pyrophosphoryl-MurNAc-pentapeptide (lipid intermediate I) to form undecaprenyl-pyrophosphoryl-MurNAc-(pentapeptide)GlcNAc (lipid intermediate II). The protein is UDP-N-acetylglucosamine--N-acetylmuramyl-(pentapeptide) pyrophosphoryl-undecaprenol N-acetylglucosamine transferase of Rickettsia rickettsii (strain Iowa).